Here is a 163-residue protein sequence, read N- to C-terminus: D-aminoacyl-tRNA deacylase (163 aa).

The Gly-cisPro motif, important for rejection of L-amino acids signature appears at 141–142 (GP).

This sequence belongs to the DTD family. In terms of assembly, homodimer.

It is found in the cytoplasm. The enzyme catalyses glycyl-tRNA(Ala) + H2O = tRNA(Ala) + glycine + H(+). It carries out the reaction a D-aminoacyl-tRNA + H2O = a tRNA + a D-alpha-amino acid + H(+). Its function is as follows. An aminoacyl-tRNA editing enzyme that deacylates mischarged D-aminoacyl-tRNAs. Also deacylates mischarged glycyl-tRNA(Ala), protecting cells against glycine mischarging by AlaRS. Acts via tRNA-based rather than protein-based catalysis; rejects L-amino acids rather than detecting D-amino acids in the active site. By recycling D-aminoacyl-tRNA to D-amino acids and free tRNA molecules, this enzyme counteracts the toxicity associated with the formation of D-aminoacyl-tRNA entities in vivo and helps enforce protein L-homochirality. This is D-aminoacyl-tRNA deacylase from Neisseria gonorrhoeae (strain ATCC 700825 / FA 1090).